A 162-amino-acid chain; its full sequence is Protein-export protein SecB (162 aa).

The protein belongs to the SecB family. Homotetramer, a dimer of dimers. One homotetramer interacts with 1 SecA dimer.

It is found in the cytoplasm. In terms of biological role, one of the proteins required for the normal export of preproteins out of the cell cytoplasm. It is a molecular chaperone that binds to a subset of precursor proteins, maintaining them in a translocation-competent state. It also specifically binds to its receptor SecA. This chain is Protein-export protein SecB, found in Hamiltonella defensa subsp. Acyrthosiphon pisum (strain 5AT).